Here is a 285-residue protein sequence, read N- to C-terminus: VQ motif-containing protein 20 (285 aa).

Residues 1–10 are compositionally biased toward basic and acidic residues; sequence MSSTYKDNHP. The interval 1 to 68 is disordered; that stretch reads MSSTYKDNHP…PSPSSFSSAA (68 aa). Residues 11–23 are compositionally biased toward basic residues; that stretch reads YHHHPHHHHHHPK. Residues 91–100 carry the VQ motif; that stretch reads FMALVQKLTG. Positions 195–218 are disordered; it reads YSAVAIPPQPPPHPPPPPPPPSMY. Residues 201–216 are compositionally biased toward pro residues; sequence PPQPPPHPPPPPPPPS.

The protein localises to the nucleus. In terms of biological role, may function as negative regulator of plant defense. This is VQ motif-containing protein 20 from Arabidopsis thaliana (Mouse-ear cress).